A 155-amino-acid chain; its full sequence is UBA-like domain-containing protein 1 (155 aa).

Positions 81–155 are disordered; that stretch reads KASESFNSSS…KASAAMEAER (75 aa). The segment covering 83–96 has biased composition (low complexity); the sequence is SESFNSSSSPSMAT. A compositionally biased stretch (polar residues) spans 112–127; sequence ANQQSLWTQGPSAQQT. Over residues 139 to 155 the composition is skewed to low complexity; that stretch reads QQAASEQKASAAMEAER.

Belongs to the UBALD family.

This chain is UBA-like domain-containing protein 1 (ubald1), found in Danio rerio (Zebrafish).